Here is a 765-residue protein sequence, read N- to C-terminus: E3 ubiquitin-protein ligase SlrP (765 aa).

The segment at 1 to 453 (MFNITNIQST…YQGPRVLFAM (453 aa)) is interaction with target proteins. 10 LRR repeats span residues 200 to 219 (QITT…ENLQ), 221 to 242 (NIKT…LPDT), 243 to 262 (IQEM…RLPS), 263 to 284 (ALQS…LPEE), 285 to 305 (LRYL…LPSE), 306 to 325 (ITHL…TLPP), 326 to 346 (GLKT…SLPP), 347 to 368 (ELQV…LPPT), 369 to 389 (ITTL…LPAA), and 390 to 410 (LQIM…LPHF). The segment at 454–461 (GDFSIVRV) is linker. The segment at 462-765 (TRPLHQAVQG…VSSLMSAYWR (304 aa)) is E3 ubiquitin-protein ligase catalytic domain. The 295-residue stretch at 464 to 758 (PLHQAVQGWL…NILLKKEVSS (295 aa)) folds into the NEL domain. Cysteine 546 acts as the Glycyl thioester intermediate in catalysis.

It belongs to the LRR-containing bacterial E3 ligase family. Interacts with host TXN. Ubiquitinated in the presence of host E1 ubiquitin-activating enzyme, E2 ubiquitin-conjugating enzyme and ubiquitin.

Its subcellular location is the secreted. It localises to the host cytoplasm. It carries out the reaction S-ubiquitinyl-[E2 ubiquitin-conjugating enzyme]-L-cysteine + [acceptor protein]-L-lysine = [E2 ubiquitin-conjugating enzyme]-L-cysteine + N(6)-ubiquitinyl-[acceptor protein]-L-lysine.. Its function is as follows. Effector proteins function to alter host cell physiology and promote bacterial survival in host tissues. This protein is an E3 ubiquitin ligase that interferes with host's ubiquitination pathway. Can ubiquitinate both ubiquitin and host TXN (thioredoxin). Leads to significant decrease of thioredoxin activity and increase of host cell death. The chain is E3 ubiquitin-protein ligase SlrP (slrP) from Salmonella typhimurium (strain 14028s / SGSC 2262).